Here is a 283-residue protein sequence, read N- to C-terminus: Thymidylate synthase (283 aa).

Arg-22 provides a ligand contact to dUMP. Residue Cys-160 is the Nucleophile of the active site. DUMP-binding positions include 180-183 (RSCD), Asn-191, and 221-223 (HIY). Asp-183 contributes to the (6R)-5,10-methylene-5,6,7,8-tetrahydrofolate binding site. A (6R)-5,10-methylene-5,6,7,8-tetrahydrofolate-binding site is contributed by Ser-282.

The protein belongs to the thymidylate synthase family. Bacterial-type ThyA subfamily. In terms of assembly, homodimer.

It is found in the cytoplasm. The catalysed reaction is dUMP + (6R)-5,10-methylene-5,6,7,8-tetrahydrofolate = 7,8-dihydrofolate + dTMP. It participates in pyrimidine metabolism; dTTP biosynthesis. Its function is as follows. Catalyzes the reductive methylation of 2'-deoxyuridine-5'-monophosphate (dUMP) to 2'-deoxythymidine-5'-monophosphate (dTMP) while utilizing 5,10-methylenetetrahydrofolate (mTHF) as the methyl donor and reductant in the reaction, yielding dihydrofolate (DHF) as a by-product. This enzymatic reaction provides an intracellular de novo source of dTMP, an essential precursor for DNA biosynthesis. This is Thymidylate synthase from Shewanella piezotolerans (strain WP3 / JCM 13877).